Reading from the N-terminus, the 549-residue chain is Chaperonin GroEL (549 aa).

ATP is bound by residues 29-32 (TLGP), Lys-50, 86-90 (DGTTT), Gly-414, 478-480 (NAA), and Asp-494.

It belongs to the chaperonin (HSP60) family. In terms of assembly, forms a cylinder of 14 subunits composed of two heptameric rings stacked back-to-back. Interacts with the co-chaperonin GroES.

It localises to the cytoplasm. The enzyme catalyses ATP + H2O + a folded polypeptide = ADP + phosphate + an unfolded polypeptide.. Functionally, together with its co-chaperonin GroES, plays an essential role in assisting protein folding. The GroEL-GroES system forms a nano-cage that allows encapsulation of the non-native substrate proteins and provides a physical environment optimized to promote and accelerate protein folding. The sequence is that of Chaperonin GroEL from Psychrobacter cryohalolentis (strain ATCC BAA-1226 / DSM 17306 / VKM B-2378 / K5).